A 375-amino-acid polypeptide reads, in one-letter code: Neutral protease 2 homolog MGYG_00813 (375 aa).

A signal peptide spans Met1–Gly19. The propeptide occupies Phe20 to Arg190. Disulfide bonds link Cys198/Cys268 and Cys275/Cys293. Position 318 (His318) interacts with Zn(2+). The active site involves Glu319. Zn(2+) is bound by residues His322 and Asp333.

The protein belongs to the peptidase M35 family. Zn(2+) serves as cofactor.

Its subcellular location is the secreted. The catalysed reaction is Preferential cleavage of bonds with hydrophobic residues in P1'. Also 3-Asn-|-Gln-4 and 8-Gly-|-Ser-9 bonds in insulin B chain.. Functionally, secreted metalloproteinase that allows assimilation of proteinaceous substrates. Shows high activities on basic nuclear substrates such as histone and protamine. May be involved in virulence. The chain is Neutral protease 2 homolog MGYG_00813 from Arthroderma gypseum (strain ATCC MYA-4604 / CBS 118893) (Microsporum gypseum).